The following is a 448-amino-acid chain: Alpha-2B adrenergic receptor (448 aa).

Topologically, residues 1–12 (MDHQEPYSVQAT) are extracellular. Residues 13–38 (AAIAAVITFLILFTIFGNALVILAVL) form a helical membrane-spanning segment. Over 39–49 (TSRSLPAPQNL) the chain is Cytoplasmic. A helical membrane pass occupies residues 50 to 75 (FLVSLAAADILVATLIIPFSLANELL). Residues 76–85 (GYWYFWRTWC) are Extracellular-facing. A disulfide bridge connects residues cysteine 85 and cysteine 163. Residues 86-108 (EVYLALDVLFCTSSIVHLCAISL) form a helical membrane-spanning segment. The Cytoplasmic portion of the chain corresponds to 109 to 130 (DRYWAVSRALEYNSKRTPRRIK). A helical membrane pass occupies residues 131-153 (CIILTVWLIAAVISLPPLIYKGD). At 154–168 (QGPSPRGPQCKINQE) the chain is on the extracellular side. The chain crosses the membrane as a helical span at residues 169 to 192 (AWYILASSIGSFFAPCLIMILVYL). At 193–370 (RIYLIAKRSH…MTREKRFTFV (178 aa)) the chain is on the cytoplasmic side. The tract at residues 203 to 326 (RRGPRAKGGP…PASMCSPSLQ (124 aa)) is disordered. Residues 293-309 (AEEEAEEEEEEEGDECE) show a composition bias toward acidic residues. A helical membrane pass occupies residues 371–394 (LAVVIGVFVLCWFPFFFTYSLGAI). The Extracellular portion of the chain corresponds to 395–403 (CPQHCKVPH). Residues 404 to 427 (GLFQFFFWIGYCNSSLNPVIYTIF) traverse the membrane as a helical segment. The Cytoplasmic portion of the chain corresponds to 428–448 (NQDFRRAFRRILCRQWTQTAW). Cysteine 440 carries the S-palmitoyl cysteine lipid modification.

It belongs to the G-protein coupled receptor 1 family. Adrenergic receptor subfamily. ADRA2B sub-subfamily. Interacts with RAB26. Interacts with PPP1R9B.

The protein localises to the cell membrane. Alpha-2 adrenergic receptors mediate the catecholamine-induced inhibition of adenylate cyclase through the action of G proteins. The sequence is that of Alpha-2B adrenergic receptor (ADRA2B) from Cavia porcellus (Guinea pig).